The following is a 396-amino-acid chain: Na(+)/H(+) antiporter NhaA 1 (396 aa).

11 helical membrane passes run 18 to 38, 60 to 80, 95 to 115, 126 to 146, 155 to 175, 178 to 198, 201 to 221, 262 to 282, 295 to 315, 333 to 353, and 362 to 382; these read LLLIGAMLLAVLCANTPLSWL, LLLWINDGLMAIFFLLVGLEV, IALPGIAAVGGMLVPALIYTG, GWAIPAATDIAFALGVIALLG, LFLLTLAILDDLGAIVIIALF, ADLSVLSLVLAMIAVAGLFIL, TGVTHIAAYVLLGVFLWICVL, VAYGILPIFAFANAGVSLAGI, IAAGLFVGKQFGIVVFSWIGV, GMAVLCGIGFTMSLFIATLAL, and AARLGVLLGSLMSALSGYYLL.

This sequence belongs to the NhaA Na(+)/H(+) (TC 2.A.33) antiporter family.

It is found in the cell inner membrane. The catalysed reaction is Na(+)(in) + 2 H(+)(out) = Na(+)(out) + 2 H(+)(in). Na(+)/H(+) antiporter that extrudes sodium in exchange for external protons. In Syntrophotalea carbinolica (strain DSM 2380 / NBRC 103641 / GraBd1) (Pelobacter carbinolicus), this protein is Na(+)/H(+) antiporter NhaA 1.